A 190-amino-acid polypeptide reads, in one-letter code: Heme-binding protein 1 (190 aa).

The protein belongs to the HEBP family. In terms of assembly, monomer.

It localises to the cytoplasm. May bind free porphyrinogens that may be present in the cell and thus facilitate removal of these potentially toxic compound. Binds with a high affinity to one molecule of heme or porphyrins. It binds metalloporphyrins, free porphyrins and N-methylprotoporphyrin with similar affinities. In Xenopus laevis (African clawed frog), this protein is Heme-binding protein 1 (hebp1).